Consider the following 718-residue polypeptide: Polyribonucleotide nucleotidyltransferase (718 aa).

Positions 496 and 502 each coordinate Mg(2+). The KH domain occupies 563-622 (PRLLTIKIDPDMIGLVIGPGGKTIKGITEETGAKIDIEDDGTVTISAVDENKAKRARNIV). One can recognise an S1 motif domain in the interval 632 to 700 (GDVYAGRVTR…NKGRINLTRL (69 aa)).

Belongs to the polyribonucleotide nucleotidyltransferase family. Requires Mg(2+) as cofactor.

The protein resides in the cytoplasm. The enzyme catalyses RNA(n+1) + phosphate = RNA(n) + a ribonucleoside 5'-diphosphate. Functionally, involved in mRNA degradation. Catalyzes the phosphorolysis of single-stranded polyribonucleotides processively in the 3'- to 5'-direction. The protein is Polyribonucleotide nucleotidyltransferase of Trichormus variabilis (strain ATCC 29413 / PCC 7937) (Anabaena variabilis).